A 1523-amino-acid chain; its full sequence is TALPID3 protein (1523 aa).

A compositionally biased stretch (polar residues) spans 1–16; that stretch reads MEAESGSSTSQDSLAS. 2 disordered regions span residues 1 to 20 and 57 to 84; these read MEAESGSSTSQDSLASLTAG and SRQAAGVALSRGETPCEPPVPSSGASNG. Coiled-coil stretches lie at residues 428-466 and 499-528; these read IEKTVKKADDLLQVLGQLRKEMHDMLQEASSWKSDMNDL and ILSDAKRVLREVQSRKKVLEENLEAVLRAK. Residues 498 to 585 form a required for centrosomal localization region; that stretch reads SILSDAKRVL…MEQVKYDQKV (88 aa). Disordered regions lie at residues 1070-1112, 1137-1262, 1294-1313, 1373-1410, and 1498-1523; these read EPLV…LSGD, VITP…SEGE, ANEMDYDPPSEGQVVRRSHK, DIDHATARASEDRPYQGSRSPSPGQLTHPAEILGDADT, and SMNIDDQTQSLSSIHGDSDSSGADTF. Pro residues predominate over residues 1073–1088; that stretch reads VPTPLPTPQATPPQTP. Over residues 1099 to 1108 the composition is skewed to polar residues; the sequence is TPESSPSITE. 2 stretches are compositionally biased toward low complexity: residues 1137–1149 and 1236–1251; these read VITPISTPPEIIT and SSEQSTQESSLTPTET. The segment covering 1373–1386 has biased composition (basic and acidic residues); sequence DIDHATARASEDRP. Over residues 1507–1523 the composition is skewed to low complexity; the sequence is SLSSIHGDSDSSGADTF.

This sequence belongs to the TALPID3 family. Ubiquitously expressed.

Its subcellular location is the cytoplasm. It is found in the cytoskeleton. It localises to the microtubule organizing center. The protein resides in the centrosome. Its function is as follows. Required for ciliogenesis and sonic hedgehog/SHH signaling. Independently, involved in regulation of cell intracellular organization. Involved in regulation of cell polarity. The sequence is that of TALPID3 protein (TALPID3) from Gallus gallus (Chicken).